The following is a 216-amino-acid chain: Dimethylamine corrinoid protein 2 (216 aa).

Positions 1 to 91 constitute a B12-binding N-terminal domain; the sequence is MASKEELLQE…EMPAGTETKK (91 aa). Residues 92 to 216 enclose the B12-binding domain; that stretch reads LGVIVNGTVE…AKAKELLLGK (125 aa). Methylcob(III)alamin is bound at residue His-105.

It belongs to the methylamine corrinoid protein family.

It participates in one-carbon metabolism; methanogenesis from dimethylamine. Its function is as follows. Acts as a methyl group carrier between MtbB and MtbA. The protein is Dimethylamine corrinoid protein 2 (mtbC2) of Methanosarcina acetivorans (strain ATCC 35395 / DSM 2834 / JCM 12185 / C2A).